The following is a 164-amino-acid chain: Small ribosomal subunit protein uS3m (164 aa).

Residues 1 to 23 (MLRSIQHVEALSSRQISTTSMLL) constitute a mitochondrion transit peptide.

It belongs to the universal ribosomal protein uS3 family. As to quaternary structure, component of the mitochondrial ribosome small subunit (28S) which comprises a 12S rRNA and about 30 distinct proteins.

Its subcellular location is the mitochondrion. This Caenorhabditis elegans protein is Small ribosomal subunit protein uS3m (mrps-24).